The chain runs to 142 residues: MKTFTAKPETVKRDWYVVDASGKTLGRLATELARRLRGKHKAEYTPHVDTGDYIIVLNAEKVAVTGNKRTDKIYYHHTGFVGGIKQATFEEMIARRPERVIEIAVKGMLPKGPLGRAMYRKLKVYAGTEHNHAAQQPQVLDI.

It belongs to the universal ribosomal protein uL13 family. As to quaternary structure, part of the 50S ribosomal subunit.

Its function is as follows. This protein is one of the early assembly proteins of the 50S ribosomal subunit, although it is not seen to bind rRNA by itself. It is important during the early stages of 50S assembly. In Yersinia pseudotuberculosis serotype O:1b (strain IP 31758), this protein is Large ribosomal subunit protein uL13.